The chain runs to 456 residues: Glutathione reductase (456 aa).

Ser-14, Gly-15, Glu-34, Thr-41, Cys-42, and Lys-50 together coordinate FAD. Ser-14 contacts glutathione. Cys-42 and Cys-47 are oxidised to a cystine. A glutathione-binding site is contributed by Tyr-99. Gly-115 is an FAD binding site. Residues Ala-180, Ile-183, Glu-186, Arg-203, Arg-209, and Gly-267 each coordinate NADP(+). Position 308 (Asp-308) interacts with FAD. Residue Glu-315 participates in NADP(+) binding. Thr-317 provides a ligand contact to FAD. Arg-325 provides a ligand contact to glutathione. Residue Val-348 participates in NADP(+) binding. His-445 is an FAD binding site. His-445 functions as the Proton acceptor in the catalytic mechanism.

Belongs to the class-I pyridine nucleotide-disulfide oxidoreductase family. As to quaternary structure, homodimer. FAD is required as a cofactor.

Its subcellular location is the cytoplasm. It carries out the reaction 2 glutathione + NADP(+) = glutathione disulfide + NADPH + H(+). In terms of biological role, catalyzes the reduction of glutathione disulfide (GSSG) to reduced glutathione (GSH). Constitutes the major mechanism to maintain a high GSH:GSSG ratio in the cytosol. This chain is Glutathione reductase (gor), found in Haemophilus influenzae (strain ATCC 51907 / DSM 11121 / KW20 / Rd).